The sequence spans 220 residues: MERYAGALEEVADGARQQERHYQLLSALQSLVKELPSSFQQRLSYTTLSDLALALLDGTVFEIVQGLLEIQHLTEKSLYNQRLRLQNEHRVLRQALRQKHQEAQQACRPHNLPVLQAAQQRELEAVEHRIREEQRAMDQKIVLELDRKVADQQSTLEKAGVAGFYVTTNPQELMLQMNLLELIRKLQQRGCWAGKAALGLGGPWQLPAAQCDQKGSPVPP.

Positions 76–142 (KSLYNQRLRL…EQRAMDQKIV (67 aa)) form a coiled coil.

This sequence belongs to the gonadal family. As to expression, found in all tissues examined with highest expression in liver, heart and skeletal muscle. Lower levels in pancreas and placenta. Weak expression in brain.

It localises to the nucleus. May play a role in neural crest cell migration into the third and fourth pharyngeal pouches. The chain is Protein DGCR6 (DGCR6) from Homo sapiens (Human).